The sequence spans 227 residues: Probable methylthioribulose-1-phosphate dehydratase (227 aa).

C87 contributes to the substrate binding site. The Zn(2+) site is built by H105 and H107. E129 serves as the catalytic Proton donor/acceptor. Residue H185 coordinates Zn(2+).

It belongs to the aldolase class II family. MtnB subfamily. The cofactor is Zn(2+).

The protein localises to the cytoplasm. It catalyses the reaction 5-(methylsulfanyl)-D-ribulose 1-phosphate = 5-methylsulfanyl-2,3-dioxopentyl phosphate + H2O. It participates in amino-acid biosynthesis; L-methionine biosynthesis via salvage pathway; L-methionine from S-methyl-5-thio-alpha-D-ribose 1-phosphate: step 2/6. In terms of biological role, catalyzes the dehydration of methylthioribulose-1-phosphate (MTRu-1-P) into 2,3-diketo-5-methylthiopentyl-1-phosphate (DK-MTP-1-P). This is Probable methylthioribulose-1-phosphate dehydratase from Drosophila ananassae (Fruit fly).